The sequence spans 120 residues: MDYEFLRDLTGQVLVRFSMGHEVIGHWLNEEIKGDLAKLDQIEAAAAEVKGSERQWQLDGHEYTLWLDGEEVMVRANQLDIEGDEMEEGMNYYDEESLCLCGLEDFLRVLQGYRNFIISK.

It belongs to the UPF0231 family.

In Yersinia enterocolitica serotype O:8 / biotype 1B (strain NCTC 13174 / 8081), this protein is UPF0231 protein YE0706.